The sequence spans 196 residues: Late protein I196L (196 aa).

A run of 2 repeats spans residues 28-48 (SIYLTTAISNNISTTISPTTS) and 49-70 (SNSLTTAISNNTSTTISPTTTS). A 3; approximate repeat occupies 71–92 (SNYLTSAISTNISDKEEDTPFS).

The protein belongs to the asfivirus I196L family.

The chain is Late protein I196L from African swine fever virus (isolate Warthog/Namibia/Wart80/1980) (ASFV).